The primary structure comprises 603 residues: Elongation factor 4 (603 aa).

The tr-type G domain occupies 7–189 (SHIRNFSIIA…SIVHLVPPPR (183 aa)). GTP contacts are provided by residues 19 to 24 (DHGKST) and 136 to 139 (NKID).

Belongs to the TRAFAC class translation factor GTPase superfamily. Classic translation factor GTPase family. LepA subfamily.

It is found in the cell inner membrane. The catalysed reaction is GTP + H2O = GDP + phosphate + H(+). Its function is as follows. Required for accurate and efficient protein synthesis under certain stress conditions. May act as a fidelity factor of the translation reaction, by catalyzing a one-codon backward translocation of tRNAs on improperly translocated ribosomes. Back-translocation proceeds from a post-translocation (POST) complex to a pre-translocation (PRE) complex, thus giving elongation factor G a second chance to translocate the tRNAs correctly. Binds to ribosomes in a GTP-dependent manner. The protein is Elongation factor 4 of Thermosynechococcus vestitus (strain NIES-2133 / IAM M-273 / BP-1).